A 246-amino-acid polypeptide reads, in one-letter code: MLYLHDVWVNWFEGEENGYNVCHFHEWRKDDQVELLDQVPLLKVSSALFNYIENSLSEIPKQLLEDVYQKAYVRKNHERIQLDYCFVITDGYGILAVDTIGYNIPIRKSRLIPRQEQLVYEMVAEHQEEPYPLPAHEKEYHILSPSPEWMMGLTRKERQLKQLLFMALDQLHLTKNVAEVRYWYTEWAPQKYPDIQKMSFEEAWQHLYEETKYGWSDKHEQLCEKLIKGQPFFEKLWEMEQEPKVN.

The protein belongs to the UPF0736 family.

The protein is UPF0736 protein GWCH70_0753 of Geobacillus sp. (strain WCH70).